We begin with the raw amino-acid sequence, 598 residues long: Peroxisomal targeting signal receptor (598 aa).

3 disordered regions span residues 1-54, 135-154, and 208-237; these read MSFM…GEMS, RGGS…MQGG, and AVGK…TTTE. The segment covering 9 to 22 has biased composition (polar residues); sequence ECSTGRNPLSQFTK. A Glycyl cysteine thioester (Cys-Gly) (interchain with G-Cter in ubiquitin) cross-link involves residue C10. K22 is covalently cross-linked (Glycyl lysine isopeptide (Lys-Gly) (interchain with G-Cter in ubiquitin)). Residues 23-35 show a composition bias toward basic and acidic residues; sequence HTAEDRSLQHDRV. Residues 220 to 233 are compositionally biased toward low complexity; that stretch reads AETATATETVTETE. 7 TPR repeats span residues 304–337, 338–371, 372–409, 410–447, 448–481, 482–515, and 516–549; these read PDPF…NTEH, AEAW…EPGN, LSAL…VVDQ, ARNQ…ANID, ADVQ…RPDD, ALLW…RPSF, and VRAR…HKVE.

Belongs to the peroxisomal targeting signal receptor family. Ubiquitination at Cys-10 is UBC4-independent but requires the presence of PEX4. Ubiquitination at Lys-22 is UBC4-dependent.

It is found in the cytoplasm. The protein localises to the peroxisome membrane. Binds to the C-terminal PTS1-type tripeptide peroxisomal targeting signal (SKL-type) and plays an essential role in peroxisomal protein import. This Yarrowia lipolytica (strain CLIB 122 / E 150) (Yeast) protein is Peroxisomal targeting signal receptor (PAY32).